The chain runs to 226 residues: B-cell antigen receptor complex-associated protein alpha chain (226 aa).

Residues 1 to 32 (MPGGPGVLQALPATIFLLFLLSAVYLGPGCQA) form the signal peptide. An Ig-like C2-type domain is found at 33–116 (LWMHKVPASL…RVQEGNESYQ (84 aa)). Topologically, residues 33 to 143 (LWMHKVPASL…LDMGEGTKNR (111 aa)) are extracellular. A disulfide bridge connects residues Cys54 and Cys106. Asn57, Asn63, Asn73, Asn88, Asn97, and Asn112 each carry an N-linked (GlcNAc...) asparagine glycan. The chain crosses the membrane as a helical span at residues 144 to 165 (IITAEGIILLFCAVVPGTLLLF). Residues 166-226 (RKRWQNEKLG…NIGDVQLEKP (61 aa)) lie on the Cytoplasmic side of the membrane. In terms of domain architecture, ITAM spans 177 to 205 (DAGDEYEDENLYEGLNLDDCSMYEDISRG). Phosphotyrosine; by SRC-type Tyr-kinases is present on residues Tyr188 and Tyr199. Arg204 carries the post-translational modification Asymmetric dimethylarginine; by PRMT1. Tyr210 carries the post-translational modification Phosphotyrosine; by Tyr-kinases.

In terms of assembly, heterodimer of alpha and beta chains; disulfide-linked. Part of the B-cell antigen receptor complex where the alpha/beta chain heterodimer is non-covalently associated with an antigen-specific membrane-bound surface immunoglobulin of two heavy chains and two light chains. Interacts through its phosphorylated ITAM domain with the SH2 domains of SYK which stimulates SYK autophosphorylation and activation. Also interacts, when phosphorylated on Tyr-210, with the SH2 domain of BLNK/SLP65, bringing BLNK into proximity with SYK and allowing SYK to phosphorylate BLNK which is necessary for trafficking of the BCR to late endosomes. Interacts with Src-family tyrosine kinases including FYN and LYN, increasing their activity. In terms of processing, phosphorylated on tyrosine, serine and threonine residues upon B-cell activation. Phosphorylation of tyrosine residues by Src-family kinases is an early and essential feature of the BCR signaling cascade. The phosphorylated tyrosines serve as docking sites for SH2-domain containing kinases, leading to their activation which in turn leads to phosphorylation of downstream targets. Phosphorylated by LYN. Phosphorylation of serine and threonine residues may prevent subsequent tyrosine phosphorylation. Arginine methylation in the ITAM domain may interfere with the binding of SYK. It promotes signals leading to B-cell differentiation. As to expression, B-cells.

The protein resides in the cell membrane. Required in cooperation with CD79B for initiation of the signal transduction cascade activated by binding of antigen to the B-cell antigen receptor complex (BCR) which leads to internalization of the complex, trafficking to late endosomes and antigen presentation. Also required for BCR surface expression and for efficient differentiation of pro- and pre-B-cells. Stimulates SYK autophosphorylation and activation. Binds to BLNK, bringing BLNK into proximity with SYK and allowing SYK to phosphorylate BLNK. Also interacts with and increases activity of some Src-family tyrosine kinases. Represses BCR signaling during development of immature B-cells. The sequence is that of B-cell antigen receptor complex-associated protein alpha chain (CD79A) from Homo sapiens (Human).